The chain runs to 290 residues: Elongation factor Ts (290 aa).

An involved in Mg(2+) ion dislocation from EF-Tu region spans residues 80 to 83 (TDFV).

It belongs to the EF-Ts family.

It is found in the cytoplasm. Associates with the EF-Tu.GDP complex and induces the exchange of GDP to GTP. It remains bound to the aminoacyl-tRNA.EF-Tu.GTP complex up to the GTP hydrolysis stage on the ribosome. The sequence is that of Elongation factor Ts from Neorickettsia sennetsu (strain ATCC VR-367 / Miyayama) (Ehrlichia sennetsu).